We begin with the raw amino-acid sequence, 181 residues long: Ferritin heavy chain (181 aa).

One can recognise a Ferritin-like diiron domain in the interval 10 to 159 (QNYHQDCEAA…DHVTNLRKMG (150 aa)). Fe cation-binding residues include Glu27, Glu62, His65, Glu107, and Gln141.

Belongs to the ferritin family. As to quaternary structure, oligomer of 24 subunits. There are two types of subunits: L (light) chain and H (heavy) chain. The major chain can be light or heavy, depending on the species and tissue type. The functional molecule forms a roughly spherical shell with a diameter of 12 nm and contains a central cavity into which the insoluble mineral iron core is deposited. In terms of tissue distribution, expressed in erythroblasts (at protein level). Expressed in heart, liver, spleen, lung, kidney, large intestine, small intestine, muscle, glandular stomach, ovary and oviduct.

The protein resides in the cytoplasm. Its subcellular location is the lysosome. The protein localises to the cytoplasmic vesicle. It localises to the autophagosome. The catalysed reaction is 4 Fe(2+) + O2 + 4 H(+) = 4 Fe(3+) + 2 H2O. Functionally, stores iron in a soluble, non-toxic, readily available form. Important for iron homeostasis. Has ferroxidase activity. Iron is taken up in the ferrous form and deposited as ferric hydroxides after oxidation. Also plays a role in delivery of iron to cells. Mediates iron uptake in capsule cells of the developing kidney. Delivery to lysosomes is mediated by the cargo receptor NCOA4 for autophagic degradation and release of iron. Inhibits translation of various mRNA species in vitro. Associates with a 35S prosome-like particle that contains non-translated mRNAs in a complex with proteins. May be involved in pre-translational regulation of some mRNA. This is Ferritin heavy chain from Anas platyrhynchos (Mallard).